A 142-amino-acid chain; its full sequence is Putative pre-16S rRNA nuclease (142 aa).

It belongs to the YqgF nuclease family.

Its subcellular location is the cytoplasm. Its function is as follows. Could be a nuclease involved in processing of the 5'-end of pre-16S rRNA. This Nitratidesulfovibrio vulgaris (strain DP4) (Desulfovibrio vulgaris) protein is Putative pre-16S rRNA nuclease.